The sequence spans 407 residues: Argininosuccinate synthase (407 aa).

Residues 12-20 and Ala39 contribute to the ATP site; that span reads AYSGGLDTS. The L-citrulline site is built by Tyr92 and Ser97. Gly122 is an ATP binding site. L-aspartate contacts are provided by Thr124, Asn128, and Asp129. Asn128 contacts L-citrulline. L-citrulline contacts are provided by Arg132, Ser182, Ser191, Glu267, and Tyr279.

The protein belongs to the argininosuccinate synthase family. Type 1 subfamily. As to quaternary structure, homotetramer.

Its subcellular location is the cytoplasm. The enzyme catalyses L-citrulline + L-aspartate + ATP = 2-(N(omega)-L-arginino)succinate + AMP + diphosphate + H(+). The protein operates within amino-acid biosynthesis; L-arginine biosynthesis; L-arginine from L-ornithine and carbamoyl phosphate: step 2/3. This chain is Argininosuccinate synthase, found in Campylobacter fetus subsp. fetus (strain 82-40).